The following is a 314-amino-acid chain: Acetyl-coenzyme A carboxylase carboxyl transferase subunit beta, chloroplastic (314 aa).

The CoA carboxyltransferase N-terminal domain maps to 47 to 314; it reads LWTRCDNCEN…APWKEKNNQV (268 aa). Cysteine 51, cysteine 54, cysteine 70, and cysteine 73 together coordinate Zn(2+). Residues 51–73 form a C4-type zinc finger; the sequence is CDNCENMLYIKFLKQNKGVCEEC.

Belongs to the AccD/PCCB family. Acetyl-CoA carboxylase is a heterohexamer composed of biotin carboxyl carrier protein, biotin carboxylase and 2 subunits each of ACCase subunit alpha and ACCase plastid-coded subunit beta (accD). It depends on Zn(2+) as a cofactor.

The protein resides in the plastid. The protein localises to the chloroplast stroma. The enzyme catalyses N(6)-carboxybiotinyl-L-lysyl-[protein] + acetyl-CoA = N(6)-biotinyl-L-lysyl-[protein] + malonyl-CoA. It participates in lipid metabolism; malonyl-CoA biosynthesis; malonyl-CoA from acetyl-CoA: step 1/1. Component of the acetyl coenzyme A carboxylase (ACC) complex. Biotin carboxylase (BC) catalyzes the carboxylation of biotin on its carrier protein (BCCP) and then the CO(2) group is transferred by the transcarboxylase to acetyl-CoA to form malonyl-CoA. This is Acetyl-coenzyme A carboxylase carboxyl transferase subunit beta, chloroplastic from Angiopteris lygodiifolia (Turnip fern).